The sequence spans 241 residues: MSKDTLFSAPIEKLGDFIFDESVAEVFPDMIQRSVPGYSNIITAIGMLASRFVTDQSNVYDLGCSRGAGILSIRRNVEKAGVRIIGVDNSEPMVERCRRHLEAYHSDIPVEILCDDIRHVEIKNASMVVLNFTLQFLPREDRLALLRKIYQGLNPNGVLVLSEKFTFEDNTINELLIDLHHTFKRANGYSELEVSQKRTALENVMRTDSIDTHKARLKEAGFSQVDLWFQCFNFGSMITIK.

Residues Y38, 63 to 65 (GCS), 88 to 89 (DN), 116 to 117 (DI), N131, and R198 contribute to the S-adenosyl-L-methionine site.

This sequence belongs to the class I-like SAM-binding methyltransferase superfamily. Cx-SAM synthase family. In terms of assembly, homodimer.

The catalysed reaction is prephenate + S-adenosyl-L-methionine = carboxy-S-adenosyl-L-methionine + 3-phenylpyruvate + H2O. Its function is as follows. Catalyzes the conversion of S-adenosyl-L-methionine (SAM) to carboxy-S-adenosyl-L-methionine (Cx-SAM). The sequence is that of Carboxy-S-adenosyl-L-methionine synthase from Glaesserella parasuis serovar 5 (strain SH0165) (Haemophilus parasuis).